A 293-amino-acid polypeptide reads, in one-letter code: Bifunctional protein FolD (293 aa).

NADP(+)-binding positions include 169-171, T196, and V237; that span reads GRG.

Belongs to the tetrahydrofolate dehydrogenase/cyclohydrolase family. As to quaternary structure, homodimer.

The catalysed reaction is (6R)-5,10-methylene-5,6,7,8-tetrahydrofolate + NADP(+) = (6R)-5,10-methenyltetrahydrofolate + NADPH. It catalyses the reaction (6R)-5,10-methenyltetrahydrofolate + H2O = (6R)-10-formyltetrahydrofolate + H(+). It participates in one-carbon metabolism; tetrahydrofolate interconversion. Functionally, catalyzes the oxidation of 5,10-methylenetetrahydrofolate to 5,10-methenyltetrahydrofolate and then the hydrolysis of 5,10-methenyltetrahydrofolate to 10-formyltetrahydrofolate. The sequence is that of Bifunctional protein FolD from Leifsonia xyli subsp. xyli (strain CTCB07).